We begin with the raw amino-acid sequence, 146 residues long: MKNEMSLAFASVSENEAFARVAVASFITQLDPTMDELTEIKTVVSEAVTNSIIHGYHNEPHHKVYIECVLQDDEIEITIRDEGVGIKDIDEAREPLYTSKPELERSGMGFTIIENFMDSVEVISAPEKGTSVYMTKQLSKSKTVYN.

It belongs to the anti-sigma-factor family.

The enzyme catalyses L-seryl-[protein] + ATP = O-phospho-L-seryl-[protein] + ADP + H(+). It carries out the reaction L-threonyl-[protein] + ATP = O-phospho-L-threonyl-[protein] + ADP + H(+). In terms of biological role, binds to sigma F and blocks its ability to form an RNA polymerase holoenzyme (E-sigma F). Phosphorylates SpoIIAA on a serine residue. This phosphorylation may enable SpoIIAA to act as an anti-anti-sigma factor that counteracts SpoIIAB and thus releases sigma F from inhibition. In Oceanobacillus iheyensis (strain DSM 14371 / CIP 107618 / JCM 11309 / KCTC 3954 / HTE831), this protein is Anti-sigma F factor.